The primary structure comprises 361 residues: Phosphoserine aminotransferase (361 aa).

Arg-42 serves as a coordination point for L-glutamate. Pyridoxal 5'-phosphate contacts are provided by residues 76 to 77, Trp-102, Thr-154, Asp-173, and Gln-196; that span reads GR. The residue at position 197 (Lys-197) is an N6-(pyridoxal phosphate)lysine. A pyridoxal 5'-phosphate-binding site is contributed by 238–239; it reads NT.

The protein belongs to the class-V pyridoxal-phosphate-dependent aminotransferase family. SerC subfamily. As to quaternary structure, homodimer. Pyridoxal 5'-phosphate is required as a cofactor.

The protein localises to the cytoplasm. The enzyme catalyses O-phospho-L-serine + 2-oxoglutarate = 3-phosphooxypyruvate + L-glutamate. It carries out the reaction 4-(phosphooxy)-L-threonine + 2-oxoglutarate = (R)-3-hydroxy-2-oxo-4-phosphooxybutanoate + L-glutamate. Its pathway is amino-acid biosynthesis; L-serine biosynthesis; L-serine from 3-phospho-D-glycerate: step 2/3. It functions in the pathway cofactor biosynthesis; pyridoxine 5'-phosphate biosynthesis; pyridoxine 5'-phosphate from D-erythrose 4-phosphate: step 3/5. Functionally, catalyzes the reversible conversion of 3-phosphohydroxypyruvate to phosphoserine and of 3-hydroxy-2-oxo-4-phosphonooxybutanoate to phosphohydroxythreonine. This Idiomarina loihiensis (strain ATCC BAA-735 / DSM 15497 / L2-TR) protein is Phosphoserine aminotransferase.